Here is a 607-residue protein sequence, read N- to C-terminus: MPRKKPFSVKQKKKQLQDKRERKRGLQDGLRSSSNSRSGSRERREEQTDTSDGESVTHHIRRLNQQPSQGLGPRGYDPNRYRLHFERDSREEVERRKRAAREQVLQPVSAEVLELDIREVYQPGSVLDFPRRPPWSYEMSKEQLMSQEERSFQEYLGKIHGAYTSEKLSYFEHNLETWRQLWRVLEMSDIVLLITDIRHPVVNFPPALYEYVTGELGLALVLVLNKVDLAPPALVVAWKHYFHQCYPQLHIVLFTSFPRDTRTPQEPGGVLKKNRRRGKGWTRALGPEQLLRACEAITVGKVDLSSWREKIARDVAGASWGNVSGEEEEEEDGPAVLVEQLTDSAMEPTGPSRERYKDGVVTIGCIGFPNVGKSSLINGLVGRKVVSVSRTPGHTRYFQTYFLTPSVKLCDCPGLIFPSLLPRQLQVLAGIYPIAQIQEPYTSVGYLASRIPVQALLHLRHPEAEDPSAEHPWCAWDICEAWAEKRGYKTAKAARNDVYRAANSLLRLAVDGRLSLCFYPPGYSEQRGTWESHPETAELVLSQGRVGPAGDEEEEEEEELSSSCEEEGEEDRDADEEGEGDEDTPTSDPGSCLTARNPYALLGEDEC.

Positions 1–14 are enriched in basic residues; it reads MPRKKPFSVKQKKK. The segment at 1–81 is disordered; that stretch reads MPRKKPFSVK…GPRGYDPNRY (81 aa). Residues 15 to 26 show a composition bias toward basic and acidic residues; it reads QLQDKRERKRGL. Residues Ser-32, Ser-33, and Ser-34 each carry the phosphoserine modification. Phosphothreonine occurs at positions 48 and 50. 2 positions are modified to phosphoserine: Ser-51 and Ser-68. The CP-type G domain maps to 178–418; that stretch reads WRQLWRVLEM…LCDCPGLIFP (241 aa). 225–228 provides a ligand contact to GTP; the sequence is NKVD. The residue at position 324 (Ser-324) is a Phosphoserine. Residues 367-374 and 411-415 each bind GTP; these read GFPNVGKS and DCPGL. The interval 544 to 607 is disordered; the sequence is GRVGPAGDEE…PYALLGEDEC (64 aa). The segment covering 550–585 has biased composition (acidic residues); that stretch reads GDEEEEEEEELSSSCEEEGEEDRDADEEGEGDEDTP. 3 positions are modified to phosphoserine: Ser-561, Ser-562, and Ser-563.

Belongs to the TRAFAC class YlqF/YawG GTPase family.

In terms of biological role, possible regulatory or functional link with the histocompatibility cluster. This is Guanine nucleotide-binding protein-like 1 (Gnl1) from Mus musculus (Mouse).